The sequence spans 417 residues: Serine hydroxymethyltransferase (417 aa).

(6S)-5,6,7,8-tetrahydrofolate is bound by residues L121 and 125-127 (GHL). An N6-(pyridoxal phosphate)lysine modification is found at K230. 355–357 (SPF) contributes to the (6S)-5,6,7,8-tetrahydrofolate binding site.

It belongs to the SHMT family. In terms of assembly, homodimer. The cofactor is pyridoxal 5'-phosphate.

The protein localises to the cytoplasm. It catalyses the reaction (6R)-5,10-methylene-5,6,7,8-tetrahydrofolate + glycine + H2O = (6S)-5,6,7,8-tetrahydrofolate + L-serine. It participates in one-carbon metabolism; tetrahydrofolate interconversion. It functions in the pathway amino-acid biosynthesis; glycine biosynthesis; glycine from L-serine: step 1/1. Functionally, catalyzes the reversible interconversion of serine and glycine with tetrahydrofolate (THF) serving as the one-carbon carrier. This reaction serves as the major source of one-carbon groups required for the biosynthesis of purines, thymidylate, methionine, and other important biomolecules. Also exhibits THF-independent aldolase activity toward beta-hydroxyamino acids, producing glycine and aldehydes, via a retro-aldol mechanism. This chain is Serine hydroxymethyltransferase, found in Ruthia magnifica subsp. Calyptogena magnifica.